The chain runs to 157 residues: Endoribonuclease YbeY (157 aa).

Histidine 116, histidine 120, and histidine 126 together coordinate Zn(2+).

Belongs to the endoribonuclease YbeY family. Requires Zn(2+) as cofactor.

It is found in the cytoplasm. Functionally, single strand-specific metallo-endoribonuclease involved in late-stage 70S ribosome quality control and in maturation of the 3' terminus of the 16S rRNA. The protein is Endoribonuclease YbeY of Paenarthrobacter aurescens (strain TC1).